Here is a 561-residue protein sequence, read N- to C-terminus: MYDFNLVLLLLQQMCVFLVIAWLMSKTPLFIPLMQVTVRLPHKFLCYIVFSIFCIMGTWFGLHIDDSIANTRAIGAVMGGLLGGPVVGGLVGLTGGLHRYSMGGMTALSCMISTIVEGLLGGLVHSILIRRGRTDKVFNPITAGAVTFVAEMVQMLIILAIARPYEDAVRLVSNIAAPMMVTNTVGAALFMRILLDKRAMFEKYTSAFSATALKVAASTEGILRQGFNEVNSMKVAQVLYQELDIGAVAITDREKLLAFTGIGDDHHLPGKPISSTYTLKAIETGEVVYADGNEVPYRCSLHPQCKLGSTLVIPLRGENQRVMGTIKLYEAKNRLFSSINRTLGEGIAQLLSAQILAGQYERQKAMLTQSEIKLLHAQVNPHFLFNALNTIKAVIRRDSEQASQLVQYLSTFFRKNLKRPSEFVTLADEIEHVNAYLQIEKARFQSRLQVNIAIPQELSQQQLPAFTLQPIVENAIKHGTSQLLDTGRVAISARREGQHLMLEIEDNAGLYQPVTNASGLGMNLVDKRLRERFGDDYGISVACEPDSYTRITLRLPWRDEA.

Topologically, residues 1–3 are cytoplasmic; the sequence is MYD. A helical transmembrane segment spans residues 4 to 24; that stretch reads FNLVLLLLQQMCVFLVIAWLM. Topologically, residues 25–43 are periplasmic; it reads SKTPLFIPLMQVTVRLPHK. The chain crosses the membrane as a helical span at residues 44 to 64; that stretch reads FLCYIVFSIFCIMGTWFGLHI. Topologically, residues 65–72 are cytoplasmic; the sequence is DDSIANTR. A helical transmembrane segment spans residues 73–93; it reads AIGAVMGGLLGGPVVGGLVGL. Residues 94 to 108 are Periplasmic-facing; the sequence is TGGLHRYSMGGMTAL. A helical membrane pass occupies residues 109 to 129; the sequence is SCMISTIVEGLLGGLVHSILI. Residues 130 to 140 lie on the Cytoplasmic side of the membrane; sequence RRGRTDKVFNP. A helical membrane pass occupies residues 141-161; the sequence is ITAGAVTFVAEMVQMLIILAI. At 162-170 the chain is on the periplasmic side; it reads ARPYEDAVR. Residues 171–191 form a helical membrane-spanning segment; that stretch reads LVSNIAAPMMVTNTVGAALFM. At 192–561 the chain is on the cytoplasmic side; that stretch reads RILLDKRAMF…TLRLPWRDEA (370 aa). Residues 354–559 form the Histidine kinase domain; sequence QILAGQYERQ…RITLRLPWRD (206 aa).

In terms of processing, autophosphorylated.

The protein resides in the cell inner membrane. It carries out the reaction ATP + protein L-histidine = ADP + protein N-phospho-L-histidine.. Functionally, member of the two-component regulatory system BtsS/BtsR. BtsS is a high-affinity receptor for extracellular pyruvate that activates BtsR by phosphorylation. The chain is Sensor histidine kinase BtsS from Escherichia coli O6:H1 (strain CFT073 / ATCC 700928 / UPEC).